The sequence spans 147 residues: Deoxyuridine 5'-triphosphate nucleotidohydrolase (147 aa).

Substrate contacts are provided by residues 63-65, Asn76, and 80-82; these read RSG and TID.

Belongs to the dUTPase family. The cofactor is Mg(2+).

It catalyses the reaction dUTP + H2O = dUMP + diphosphate + H(+). It participates in pyrimidine metabolism; dUMP biosynthesis; dUMP from dCTP (dUTP route): step 2/2. In terms of biological role, this enzyme is involved in nucleotide metabolism: it produces dUMP, the immediate precursor of thymidine nucleotides and it decreases the intracellular concentration of dUTP so that uracil cannot be incorporated into DNA. This Chlamydia abortus (strain DSM 27085 / S26/3) (Chlamydophila abortus) protein is Deoxyuridine 5'-triphosphate nucleotidohydrolase.